Here is a 94-residue protein sequence, read N- to C-terminus: MNIYSIIKKPHVTEKTSLGTEAANTITLVVDRDSNKIEIKKAVESLFKVNVTSVRTVNVAGKVKRFGRNYGKRQNWKKAYITLKEGQTVDFFEV.

Belongs to the universal ribosomal protein uL23 family. In terms of assembly, part of the 50S ribosomal subunit. Contacts protein L29, and trigger factor when it is bound to the ribosome.

In terms of biological role, one of the early assembly proteins it binds 23S rRNA. One of the proteins that surrounds the polypeptide exit tunnel on the outside of the ribosome. Forms the main docking site for trigger factor binding to the ribosome. The protein is Large ribosomal subunit protein uL23 of Trichlorobacter lovleyi (strain ATCC BAA-1151 / DSM 17278 / SZ) (Geobacter lovleyi).